Consider the following 1150-residue polypeptide: MSLRFIYGRAGSGKSQYCLNSIKNRIEEDIDRPLILLVPEQFSFQAEKNLIEVLDEKTGFKTQVLSFKRMAYRVFNEVGGITAKHMNESGKSMLLYNIIEDNKNNLKVFKKAAKRQGFITTISDIITEFKRYNITPEIILNNLENIEGDNLKYKMEDLALIFSQFETRLHKNYIDNEDDLTILAEKLNKSKQFDNAEIWIDEFSSFSPQEYSVLEKLLLKSYRINITLCTDYLNQGRFVDTTDVFSPIKNTENKLLQIIEDNNIKLDKPIALNCDPCARFKNSAELQHLEKNMFSFPYKEYKNETKDICMLKTLNQFTEIENTAKDIIKLCIDKGCRFKDIAVITGDLEGYENIISSVFLQYNIPFFIDKKREINNNPIIVLILSALEVLSKNWTYESVFRYLKTGLLDINNEEMDILENYVLANGIKGYQWTNDKPWEHKFFSNYELEDQVEKELLAKINDIRYKAMEPIVTLNKNFKSIDKAKEFCEVLYEFLCNINLPDKIQNMIEDFKVEGEIEKASEYNQIWNIVMEVLDQIVEVIGEEKISLKEFFKILQTGLSEYEIGLIPPTLDQVMVGSITRLRSHNINTLYIVGVNDGIFPSPLKEEGILSDDDRKFLGDKGLEIAKDTKSIAFEEQFLVYSTLTTPSKYLRLSYPIADGEGKTLRPSIIISRIKKIFTNICEENDIVKLNGEEEELKNISSAKPTFNYLISNLRKDVEGAKIDNIWGDTYKWYLENEFWIEKLNRLIKGFDYTNQSKYIETKKIRNLYGKPLKISVSRVEKFSQCPFAYFVQYGLKAKDRKIFNLSYPDLGIFMHSILEKFSHELEKQGLEWDTMDLNWAEEEIDKLINEELDNKSLDILNSSKRYEYVTKSVKKILKRSIWLIGEHIKRGNFKPSYYELSFDIDGDYPPIAMELHSGEVVNLIGRVDRVDLLQKDGATYLKIIDYKSGAKEFKLSDVYYGLQLQLLIYLDAILTELAERSGINGEPGALLYLKLDDPIVKNTVDMSDEEIEKSIIKNLKMKGLILNDPNVIRDMDNIISGISDIIPVMVKKDGGVSEGRSSVATKEEFETLRKYVRYTIIEICEEMLEGNIEIKPYKKKDGSSCDYCIYSSVCKFDTNIRGNKYNILIDKKDEEVWDAIKKKLEYKNI.

An ATP-binding site is contributed by 8-15 (GRAGSGKS). [4Fe-4S] cluster-binding residues include Cys786, Cys1106, Cys1109, and Cys1115.

Belongs to the helicase family. AddB/RexB type 1 subfamily. Heterodimer of AddA and AddB. Mg(2+) serves as cofactor. The cofactor is [4Fe-4S] cluster.

The heterodimer acts as both an ATP-dependent DNA helicase and an ATP-dependent, dual-direction single-stranded exonuclease. Recognizes the chi site generating a DNA molecule suitable for the initiation of homologous recombination. The AddB subunit has 5' -&gt; 3' nuclease activity but not helicase activity. In Clostridium botulinum (strain Hall / ATCC 3502 / NCTC 13319 / Type A), this protein is ATP-dependent helicase/deoxyribonuclease subunit B.